The chain runs to 169 residues: S-ribosylhomocysteine lyase (169 aa).

Residues histidine 54, histidine 58, and cysteine 128 each coordinate Fe cation.

This sequence belongs to the LuxS family. In terms of assembly, homodimer. Fe cation is required as a cofactor.

It catalyses the reaction S-(5-deoxy-D-ribos-5-yl)-L-homocysteine = (S)-4,5-dihydroxypentane-2,3-dione + L-homocysteine. Functionally, involved in the synthesis of autoinducer 2 (AI-2) which is secreted by bacteria and is used to communicate both the cell density and the metabolic potential of the environment. The regulation of gene expression in response to changes in cell density is called quorum sensing. Catalyzes the transformation of S-ribosylhomocysteine (RHC) to homocysteine (HC) and 4,5-dihydroxy-2,3-pentadione (DPD). The chain is S-ribosylhomocysteine lyase from Tolumonas auensis (strain DSM 9187 / NBRC 110442 / TA 4).